Consider the following 92-residue polypeptide: Large ribosomal subunit protein bL27 (92 aa).

The disordered stretch occupies residues 1 to 26; the sequence is MAHKKGASSSSNGRDSESKRLGVKRF.

This sequence belongs to the bacterial ribosomal protein bL27 family.

This Corynebacterium aurimucosum (strain ATCC 700975 / DSM 44827 / CIP 107346 / CN-1) (Corynebacterium nigricans) protein is Large ribosomal subunit protein bL27.